Consider the following 754-residue polypeptide: RNA-directed RNA polymerase catalytic subunit (754 aa).

2 short sequence motifs (nuclear localization signal) span residues 189-197 and 205-218; these read MVRREKDKR and KVPVMGIDSIKHDE. A promoter-binding site region spans residues 251–258; the sequence is RPFSKIVE. The RdRp catalytic domain occupies 288–484; the sequence is VTSLNARMNS…GINMSLEKSY (197 aa).

It belongs to the influenza viruses polymerase PB1 family. In terms of assembly, influenza RNA polymerase is composed of three subunits: PB1, PB2 and PA. Interacts (via N-terminus) with PA (via C-terminus). Interacts (via C-terminus) with PB2 (via N-terminus); this interaction is essential for transcription initiation. Phosphorylated by host PRKCA.

The protein localises to the host nucleus. It is found in the host cytoplasm. It carries out the reaction RNA(n) + a ribonucleoside 5'-triphosphate = RNA(n+1) + diphosphate. Functionally, RNA-dependent RNA polymerase which is responsible for replication and transcription of virus RNA segments. The transcription of viral mRNAs occurs by a unique mechanism called cap-snatching. 5' methylated caps of cellular mRNAs are cleaved after 10-13 nucleotides by PA. In turn, these short capped RNAs are used as primers by PB1 for transcription of viral mRNAs. During virus replication, PB1 initiates RNA synthesis and copy vRNA into complementary RNA (cRNA) which in turn serves as a template for the production of more vRNAs. In Influenza C virus (strain C/Ann Arbor/1/1950), this protein is RNA-directed RNA polymerase catalytic subunit.